A 464-amino-acid polypeptide reads, in one-letter code: Protein FAM90A15 (464 aa).

3 disordered regions span residues 1 to 42 (MMAR…DPRL), 70 to 389 (PATL…HDGA), and 415 to 437 (HSPEKPGAFLAQSPHVSEKSEAP). 2 stretches are compositionally biased toward basic and acidic residues: residues 74–89 (GKKEGKENLKPWKPRV) and 97–114 (NKDKGEKEERPRQQDPQR). The segment covering 180–197 (LASLSPLRKASLSSSSSL) has biased composition (low complexity).

Belongs to the FAM90 family.

This Homo sapiens (Human) protein is Protein FAM90A15.